A 445-amino-acid chain; its full sequence is Serine--tRNA ligase (445 aa).

L-serine is bound at residue 250-252 (TAE). Position 281–283 (281–283 (RAE)) interacts with ATP. E304 contacts L-serine. 368-371 (EISS) provides a ligand contact to ATP. L-serine is bound at residue S404.

Belongs to the class-II aminoacyl-tRNA synthetase family. Type-1 seryl-tRNA synthetase subfamily. In terms of assembly, homodimer. The tRNA molecule binds across the dimer.

The protein localises to the cytoplasm. It carries out the reaction tRNA(Ser) + L-serine + ATP = L-seryl-tRNA(Ser) + AMP + diphosphate + H(+). The catalysed reaction is tRNA(Sec) + L-serine + ATP = L-seryl-tRNA(Sec) + AMP + diphosphate + H(+). Its pathway is aminoacyl-tRNA biosynthesis; selenocysteinyl-tRNA(Sec) biosynthesis; L-seryl-tRNA(Sec) from L-serine and tRNA(Sec): step 1/1. Functionally, catalyzes the attachment of serine to tRNA(Ser). Is also able to aminoacylate tRNA(Sec) with serine, to form the misacylated tRNA L-seryl-tRNA(Sec), which will be further converted into selenocysteinyl-tRNA(Sec). In Azorhizobium caulinodans (strain ATCC 43989 / DSM 5975 / JCM 20966 / LMG 6465 / NBRC 14845 / NCIMB 13405 / ORS 571), this protein is Serine--tRNA ligase.